The sequence spans 340 residues: Ribosomal RNA large subunit methyltransferase F (340 aa).

The protein belongs to the methyltransferase superfamily. METTL16/RlmF family.

The protein resides in the cytoplasm. The catalysed reaction is adenosine(1618) in 23S rRNA + S-adenosyl-L-methionine = N(6)-methyladenosine(1618) in 23S rRNA + S-adenosyl-L-homocysteine + H(+). Specifically methylates the adenine in position 1618 of 23S rRNA. In Dechloromonas aromatica (strain RCB), this protein is Ribosomal RNA large subunit methyltransferase F.